The following is a 684-amino-acid chain: Extracellular lipase (684 aa).

An N-terminal signal peptide occupies residues 1–48; the sequence is MKKKLIYAAVVSALLAGCGGSDDNKGDTSSYLDYLLTGSNAVGPSALA. Disordered stretches follow at residues 321 to 405 and 462 to 493; these read SIPV…ADWG and QRER…GDRS. The segment covering 385-405 has biased composition (basic and acidic residues); the sequence is ADCRSDPPERAAGRGEQADWG. Catalysis depends on Ser-568, which acts as the Nucleophile.

This sequence belongs to the AB hydrolase superfamily. Lipase family. As to quaternary structure, monomer.

It is found in the secreted. It carries out the reaction a triacylglycerol + H2O = a diacylglycerol + a fatty acid + H(+). Functionally, the optimum chain lengths for the acyl moiety is C6 for ester hydrolysis and C6 and C8 for triacylglycerol hydrolysis. In Aeromonas hydrophila, this protein is Extracellular lipase.